The following is a 400-amino-acid chain: DNA polymerase IV (400 aa).

Residues I5–G187 form the UmuC domain. Positions 9 and 105 each coordinate Mg(2+). The active site involves E106.

Belongs to the DNA polymerase type-Y family. Monomer. Mg(2+) serves as cofactor.

The protein localises to the cytoplasm. It catalyses the reaction DNA(n) + a 2'-deoxyribonucleoside 5'-triphosphate = DNA(n+1) + diphosphate. In terms of biological role, poorly processive, error-prone DNA polymerase involved in untargeted mutagenesis. Copies undamaged DNA at stalled replication forks, which arise in vivo from mismatched or misaligned primer ends. These misaligned primers can be extended by PolIV. Exhibits no 3'-5' exonuclease (proofreading) activity. May be involved in translesional synthesis, in conjunction with the beta clamp from PolIII. In Clostridium kluyveri (strain ATCC 8527 / DSM 555 / NBRC 12016 / NCIMB 10680 / K1), this protein is DNA polymerase IV.